We begin with the raw amino-acid sequence, 391 residues long: 3-ketoacyl-CoA thiolase (391 aa).

The active-site Acyl-thioester intermediate is the cysteine 95. Active-site proton acceptor residues include histidine 347 and cysteine 377.

This sequence belongs to the thiolase-like superfamily. Thiolase family. Heterotetramer of two alpha chains (FadB) and two beta chains (FadA).

It is found in the cytoplasm. The enzyme catalyses an acyl-CoA + acetyl-CoA = a 3-oxoacyl-CoA + CoA. It functions in the pathway lipid metabolism; fatty acid beta-oxidation. In terms of biological role, catalyzes the final step of fatty acid oxidation in which acetyl-CoA is released and the CoA ester of a fatty acid two carbons shorter is formed. The polypeptide is 3-ketoacyl-CoA thiolase (Pseudomonas entomophila (strain L48)).